We begin with the raw amino-acid sequence, 94 residues long: MSRSAWKPPFCHPSILKSVNNALNKGFVNMAIKVHSRASVILPNCLGLKFAVYNGKDYIPVNVNDQNMIGHKFGEFSPTRKFTGHSGDKKATRR.

Belongs to the universal ribosomal protein uS19 family.

In terms of biological role, protein S19 forms a complex with S13 that binds strongly to the 16S ribosomal RNA. In Wolbachia pipientis wMel, this protein is Small ribosomal subunit protein uS19.